Consider the following 76-residue polypeptide: Probable small nuclear ribonucleoprotein G (76 aa).

The region spanning 4-76 (AHPPEVKKYM…IVMVEALDRV (73 aa)) is the Sm domain.

This sequence belongs to the snRNP Sm proteins family. In terms of assembly, interacts with the SMN complex. Core component of the spliceosomal U1, U2, U4 and U5 small nuclear ribonucleoproteins (snRNPs), the building blocks of the spliceosome. Most spliceosomal snRNPs contain a common set of Sm proteins, SNRPB, SNRPD1, SNRPD2, SNRPD3, SNRPE, SNRPF and SNRPG that assemble in a heptameric protein ring on the Sm site of the small nuclear RNA to form the core snRNP. Component of the U1 snRNP. Component of the U4/U6-U5 tri-snRNP complex. Component of the U7 snRNP complex. Component of the U11/U12 snRNPs that are part of the U12-type spliceosome.

The protein localises to the cytoplasm. It is found in the cytosol. It localises to the nucleus. Plays a role in pre-mRNA splicing as a core component of the spliceosomal U1, U2, U4 and U5 small nuclear ribonucleoproteins (snRNPs), the building blocks of the spliceosome. Component of both the pre-catalytic spliceosome B complex and activated spliceosome C complexes. Is also a component of the minor U12 spliceosome. In Drosophila melanogaster (Fruit fly), this protein is Probable small nuclear ribonucleoprotein G.